The chain runs to 149 residues: Alpha-crystallin A chain (149 aa).

Positions 28–138 (LLRGFMDSGI…SHSERPIPVS (111 aa)) constitute a sHSP domain. 6 residues coordinate Zn(2+): His-55, His-76, Glu-78, His-83, His-91, and His-130. Positions 125 to 149 (NLVSSHSERPIPVSREEKPTSAPSS) are disordered. Over residues 130–143 (HSERPIPVSREEKP) the composition is skewed to basic and acidic residues. The O-linked (GlcNAc) serine glycan is linked to Ser-138.

This sequence belongs to the small heat shock protein (HSP20) family. Heteropolymer composed of three CRYAA and one CRYAB subunits. Inter-subunit bridging via zinc ions enhances stability, which is crucial as there is no protein turn over in the lens. Can also form homodimers and homotetramers (dimers of dimers) which serve as the building blocks of homooligomers. Within homooligomers, the zinc-binding motif is created from residues of 3 different molecules. His-76 and Glu-78 from one molecule are ligands of the zinc ion, and His-83 and His-130 residues from additional molecules complete the site with tetrahedral coordination geometry.

It localises to the cytoplasm. Its subcellular location is the nucleus. Contributes to the transparency and refractive index of the lens. May act as a chaperone, preventing aggregation of various proteins under a wide range of stress conditions. The chain is Alpha-crystallin A chain (CRYAA) from Rana temporaria (European common frog).